The primary structure comprises 469 residues: 2-oxoisovalerate dehydrogenase subunit beta, mitochondrial (469 aa).

Residues 1–40 (MKRSTVVIRPSARALSRQASSQSFLLARSSALTSRQRRLY) constitute a mitochondrion transit peptide. Tyr-167 lines the thiamine diphosphate pocket. Residues Gly-194, Leu-196, and Thr-197 each contribute to the K(+) site.

In terms of assembly, heterotetramer of 2 alpha and 2 beta chains. The cofactor is thiamine diphosphate.

The protein localises to the mitochondrion matrix. It carries out the reaction N(6)-[(R)-lipoyl]-L-lysyl-[protein] + 3-methyl-2-oxobutanoate + H(+) = N(6)-[(R)-S(8)-2-methylpropanoyldihydrolipoyl]-L-lysyl-[protein] + CO2. Its function is as follows. The branched-chain alpha-keto dehydrogenase complex catalyzes the overall conversion of alpha-keto acids to acyl-CoA and CO(2). It contains multiple copies of three enzymatic components: branched-chain alpha-keto acid decarboxylase (E1), lipoamide acyltransferase (E2) and lipoamide dehydrogenase (E3). The chain is 2-oxoisovalerate dehydrogenase subunit beta, mitochondrial from Chaetomium thermophilum (strain DSM 1495 / CBS 144.50 / IMI 039719) (Thermochaetoides thermophila).